A 232-amino-acid chain; its full sequence is Proteasome subunit alpha type-2 (232 aa).

It belongs to the peptidase T1A family. In terms of assembly, the 26S proteasome consists of a 20S proteasome core and two 19S regulatory subunits. The 20S proteasome core is composed of 28 subunits that are arranged in four stacked rings, resulting in a barrel-shaped structure. The two end rings are each formed by seven alpha subunits, and the two central rings are each formed by seven beta subunits. The catalytic chamber with the active sites is on the inside of the barrel.

The protein localises to the cytoplasm. Its subcellular location is the nucleus. Its function is as follows. The proteasome is a multicatalytic proteinase complex which is characterized by its ability to cleave peptides with Arg, Phe, Tyr, Leu, and Glu adjacent to the leaving group at neutral or slightly basic pH. The proteasome has an ATP-dependent proteolytic activity. This is Proteasome subunit alpha type-2 (psmA2) from Dictyostelium discoideum (Social amoeba).